The following is a 213-amino-acid chain: MVADVKSPAGLAAFNTTLAEQAFATGFVLSGEDAQLFAALGSAPNASTYPNVARWYANVASYTDAERKTWASAGGSAPAAAAADGDDFDLFGSDDEEEDAEKAKIVEERLAAYAEKKAKKAGPIAKSSVILDVKPWDDETDLGEMEKLVRSIEMDGLVWGGAKLIPIGYGIKKLQIITVIEDLKVSVDDLIEKITGDFEDHVQSVDIVAFNKI.

Belongs to the EF-1-beta/EF-1-delta family. EF-1 is composed of 4 subunits: alpha, beta, delta, and gamma.

Functionally, EF-1-beta and EF-1-delta stimulate the exchange of GDP bound to EF-1-alpha to GTP. The protein is Probable elongation factor 1-beta/1-delta 1 (eef-1B.1) of Caenorhabditis elegans.